Reading from the N-terminus, the 90-residue chain is CRISPR-associated endonuclease Cas2 2 (90 aa).

Mg(2+) is bound at residue D11.

The protein belongs to the CRISPR-associated endoribonuclease Cas2 protein family. In terms of assembly, homodimer, forms a heterotetramer with a Cas1 homodimer. Requires Mn(2+) as cofactor. It depends on Mg(2+) as a cofactor.

Inhibited by EDTA and at pH 6.0. Its function is as follows. CRISPR (clustered regularly interspaced short palindromic repeat), is an adaptive immune system that provides protection against mobile genetic elements (viruses, transposable elements and conjugative plasmids). CRISPR clusters contain sequences complementary to antecedent mobile elements and target invading nucleic acids. CRISPR clusters are transcribed and processed into CRISPR RNA (crRNA). Involved in the integration of spacer DNA into the CRISPR cassette. Functions as a dsDNA endonuclease and as a weak ssRNase. This Thermus thermophilus (strain ATCC BAA-163 / DSM 7039 / HB27) protein is CRISPR-associated endonuclease Cas2 2 (cas2b).